Reading from the N-terminus, the 1997-residue chain is Chromatin-remodeling ATPase INO80 (1997 aa).

Disordered stretches follow at residues 1-378, 397-579, and 674-858; these read MDHF…AAPS, IAAP…AENE, and ERKK…EKVV. Residues 12–25 are compositionally biased toward basic and acidic residues; the sequence is PHFDEDGTEGRGDR. Positions 32–41 are enriched in pro residues; it reads GPAPPPPPPR. Low complexity predominate over residues 49-64; sequence NPVSSNSAVQSQAAAA. Over residues 89–107 the composition is skewed to polar residues; that stretch reads STNSMRATPHSSSSFNLRS. Over residues 108 to 117 the composition is skewed to basic and acidic residues; it reads PTREPSEYRH. Low complexity-rich tracts occupy residues 118 to 156, 203 to 230, and 240 to 251; these read PLSS…SLSS, SLQA…PLSA, and SSSSQPPARASQ. The span at 264–276 shows a compositional bias: basic and acidic residues; sequence SFRDRDSSVREKS. Over residues 288–297 the composition is skewed to polar residues; that stretch reads EASNGISGSS. Positions 298–317 are enriched in basic and acidic residues; sequence PRKDRDRDRDHRGTTRESQR. Composition is skewed to polar residues over residues 318–340 and 366–378; these read RSVS…SASN and VDNT…AAPS. Low complexity predominate over residues 411–420; the sequence is SPRLSLRPPS. 3 stretches are compositionally biased toward polar residues: residues 433–442, 451–465, and 472–481; these read NPTNGTTSTA, SPPS…TNPS, and SFSNILSSSE. Basic and acidic residues-rich tracts occupy residues 500–519 and 529–540; these read VPMK…EKKE and RISDIRHSESTP. The stretch at 666–735 forms a coiled coil; it reads ERELFAEKER…VQQTRLILQK (70 aa). Low complexity predominate over residues 689 to 707; that stretch reads MATTMEAKAAALARASAAQ. Residues 709-723 are compositionally biased toward basic and acidic residues; sequence EAERQKYMREAERAN. The span at 769–781 shows a compositional bias: basic residues; sequence TKGKGRAGARPKK. A compositionally biased stretch (basic and acidic residues) spans 782-793; that stretch reads SKEQKQAEKDAA. Positions 794-806 are enriched in low complexity; it reads EAAQAALDAGLEL. Over residues 824–858 the composition is skewed to basic and acidic residues; it reads APKEADVDKDKENKEPQEPKEPKEPKEKVIKEKVV. Residues 881 to 1006 enclose the DBINO domain; the sequence is IWRDLARKDV…SHFIGKKIKT (126 aa). A Helicase ATP-binding domain is found at 1130-1302; that stretch reads VNLYEQGING…WALLHFIMPS (173 aa). 1143-1150 serves as a coordination point for ATP; that stretch reads DEMGLGKT. The DEAQ box motif lies at 1253-1256; it reads DEAQ. In terms of domain architecture, Helicase C-terminal spans 1702-1858; that stretch reads KLDELLRELK…GSSAAGGGVD (157 aa). A compositionally biased stretch (basic and acidic residues) spans 1891–1902; the sequence is ELLESGELDKMQ. The segment at 1891 to 1986 is disordered; it reads ELLESGELDK…GSKKAKTTKQ (96 aa). Residues 1903–1914 show a composition bias toward basic residues; that stretch reads KKSRGGNKRKRG. Positions 1919–1933 are enriched in basic and acidic residues; it reads EGKEVSLDEMYHEGE. The segment covering 1954–1967 has biased composition (gly residues); the sequence is AAGGEGGDGKGAVG. A compositionally biased stretch (basic residues) spans 1970-1985; the sequence is AKKRKTGGSKKAKTTK.

This sequence belongs to the SNF2/RAD54 helicase family. As to quaternary structure, component of the INO80 chromatin-remodeling complex.

The protein resides in the nucleus. The catalysed reaction is ATP + H2O = ADP + phosphate + H(+). Functionally, ATPase component of the INO80 complex which remodels chromatin by shifting nucleosomes and is involved in DNA repair. The polypeptide is Chromatin-remodeling ATPase INO80 (crf2-1) (Neurospora crassa (strain ATCC 24698 / 74-OR23-1A / CBS 708.71 / DSM 1257 / FGSC 987)).